Consider the following 335-residue polypeptide: Tryptophan--tRNA ligase (335 aa).

ATP is bound by residues 11–13 (QPT) and 19–20 (GN). A 'HIGH' region motif is present at residues 12-20 (PTGNLHLGN). D135 is an L-tryptophan binding site. ATP contacts are provided by residues 147–149 (GED), V189, and 198–202 (KMSKS). The short motif at 198–202 (KMSKS) is the 'KMSKS' region element.

The protein belongs to the class-I aminoacyl-tRNA synthetase family. Homodimer.

The protein localises to the cytoplasm. The enzyme catalyses tRNA(Trp) + L-tryptophan + ATP = L-tryptophyl-tRNA(Trp) + AMP + diphosphate + H(+). Its function is as follows. Catalyzes the attachment of tryptophan to tRNA(Trp). The sequence is that of Tryptophan--tRNA ligase from Nostoc sp. (strain PCC 7120 / SAG 25.82 / UTEX 2576).